Reading from the N-terminus, the 380-residue chain is RNA binding protein fox-1 homolog 2 (380 aa).

2 stretches are compositionally biased toward polar residues: residues 1 to 20 (MEKNKMVSQGNQEPTATPDT) and 36 to 56 (NGLSTDYGSQHTQEYATQSTE). Residues 1–117 (MEKNKMVSQG…TPKRLHVSNI (117 aa)) are disordered. Over residues 72-102 (STPATSTANASSTTDGSQTEGQQSQTQNSEN) the composition is skewed to low complexity. Residues 110 to 186 (KRLHVSNIPF…RKIEVNNATA (77 aa)) form the RRM domain.

It is found in the nucleus. Its subcellular location is the cytoplasm. RNA-binding protein that regulates alternative splicing events by binding to 5'-UGCAUGU-3' elements. Regulates alternative splicing of tissue-specific exons. This chain is RNA binding protein fox-1 homolog 2 (rbfox2), found in Xenopus tropicalis (Western clawed frog).